The sequence spans 151 residues: Deoxyuridine 5'-triphosphate nucleotidohydrolase (151 aa).

Substrate-binding positions include 70–72 (RSG), asparagine 83, 87–89 (LID), and methionine 97.

This sequence belongs to the dUTPase family. It depends on Mg(2+) as a cofactor.

It carries out the reaction dUTP + H2O = dUMP + diphosphate + H(+). Its pathway is pyrimidine metabolism; dUMP biosynthesis; dUMP from dCTP (dUTP route): step 2/2. Functionally, this enzyme is involved in nucleotide metabolism: it produces dUMP, the immediate precursor of thymidine nucleotides and it decreases the intracellular concentration of dUTP so that uracil cannot be incorporated into DNA. This Glaesserella parasuis serovar 5 (strain SH0165) (Haemophilus parasuis) protein is Deoxyuridine 5'-triphosphate nucleotidohydrolase.